Reading from the N-terminus, the 480-residue chain is Ribulose bisphosphate carboxylase large chain (480 aa).

Residues 1–2 constitute a propeptide that is removed on maturation; it reads MS. At Pro3 the chain carries N-acetylproline. An N6,N6,N6-trimethyllysine modification is found at Lys14. 2 residues coordinate substrate: Asn123 and Thr173. Lys175 functions as the Proton acceptor in the catalytic mechanism. A substrate-binding site is contributed by Lys177. The Mg(2+) site is built by Lys201, Asp203, and Glu204. An N6-carboxylysine modification is found at Lys201. His294 (proton acceptor) is an active-site residue. Substrate is bound by residues Arg295, His327, and Ser379.

It belongs to the RuBisCO large chain family. Type I subfamily. Heterohexadecamer of 8 large chains and 8 small chains; disulfide-linked. The disulfide link is formed within the large subunit homodimers. Mg(2+) is required as a cofactor. The disulfide bond which can form in the large chain dimeric partners within the hexadecamer appears to be associated with oxidative stress and protein turnover.

The protein localises to the plastid. It localises to the chloroplast. It carries out the reaction 2 (2R)-3-phosphoglycerate + 2 H(+) = D-ribulose 1,5-bisphosphate + CO2 + H2O. The catalysed reaction is D-ribulose 1,5-bisphosphate + O2 = 2-phosphoglycolate + (2R)-3-phosphoglycerate + 2 H(+). Functionally, ruBisCO catalyzes two reactions: the carboxylation of D-ribulose 1,5-bisphosphate, the primary event in carbon dioxide fixation, as well as the oxidative fragmentation of the pentose substrate in the photorespiration process. Both reactions occur simultaneously and in competition at the same active site. The polypeptide is Ribulose bisphosphate carboxylase large chain (Alluaudia procera (Madagascan ocotillo)).